A 251-amino-acid polypeptide reads, in one-letter code: Small ribosomal subunit protein uS2 (251 aa).

This sequence belongs to the universal ribosomal protein uS2 family.

The sequence is that of Small ribosomal subunit protein uS2 (rpsB) from Arthrospira platensis (Spirulina platensis).